The primary structure comprises 477 residues: UDP-N-acetylmuramate--L-alanine ligase (477 aa).

An ATP-binding site is contributed by 115–121 (GTHGKTT).

This sequence belongs to the MurCDEF family.

It is found in the cytoplasm. The enzyme catalyses UDP-N-acetyl-alpha-D-muramate + L-alanine + ATP = UDP-N-acetyl-alpha-D-muramoyl-L-alanine + ADP + phosphate + H(+). Its pathway is cell wall biogenesis; peptidoglycan biosynthesis. In terms of biological role, cell wall formation. This Gluconobacter oxydans (strain 621H) (Gluconobacter suboxydans) protein is UDP-N-acetylmuramate--L-alanine ligase.